The sequence spans 181 residues: Small ribosomal subunit protein bS16 (181 aa).

Residues 150–181 form a disordered region; that stretch reads KKAAEEAAKAAAEAPAEEAAPAEEAATEAAAE. Residues 158–181 are compositionally biased toward low complexity; that stretch reads KAAAEAPAEEAAPAEEAATEAAAE.

Belongs to the bacterial ribosomal protein bS16 family.

The protein is Small ribosomal subunit protein bS16 of Bacteroides fragilis (strain ATCC 25285 / DSM 2151 / CCUG 4856 / JCM 11019 / LMG 10263 / NCTC 9343 / Onslow / VPI 2553 / EN-2).